The following is a 415-amino-acid chain: Tyrosine--tRNA ligase (415 aa).

The short motif at 54 to 63 (PTGRDIHLGH) is the 'HIGH' region element. A 'KMSKS' region motif is present at residues 248-252 (KMSKS). Lys251 is a binding site for ATP. Residues 351 to 415 (AKAFYLLSAI…GKKTFRRLTR (65 aa)) enclose the S4 RNA-binding domain.

This sequence belongs to the class-I aminoacyl-tRNA synthetase family. TyrS type 2 subfamily. Homodimer.

Its subcellular location is the cytoplasm. The catalysed reaction is tRNA(Tyr) + L-tyrosine + ATP = L-tyrosyl-tRNA(Tyr) + AMP + diphosphate + H(+). In terms of biological role, catalyzes the attachment of tyrosine to tRNA(Tyr) in a two-step reaction: tyrosine is first activated by ATP to form Tyr-AMP and then transferred to the acceptor end of tRNA(Tyr). The chain is Tyrosine--tRNA ligase from Prochlorococcus marinus (strain MIT 9313).